The chain runs to 140 residues: Putative nickel-responsive regulator 2 (140 aa).

Residues His81, His92, His94, and Cys100 each contribute to the Ni(2+) site.

The protein belongs to the transcriptional regulatory CopG/NikR family. Ni(2+) serves as cofactor.

Functionally, transcriptional regulator. In Methanosarcina acetivorans (strain ATCC 35395 / DSM 2834 / JCM 12185 / C2A), this protein is Putative nickel-responsive regulator 2.